The sequence spans 413 residues: SWIRM domain-containing protein FUN19 (413 aa).

Residues 35 to 51 (KASNNNNDSNKNGLNMS) are compositionally biased toward low complexity. Disordered stretches follow at residues 35-55 (KASN…DYSN), 189-211 (YNDD…PLAS), and 249-271 (YSPQ…PSAS). Thr194 carries the phosphothreonine modification. Low complexity predominate over residues 200 to 211 (SSSSRLPSPLAS). Ser207 and Ser211 each carry phosphoserine. The SWIRM domain maps to 316-413 (LKIEWKGSPM…LQDSNFTKYL (98 aa)).

In Saccharomyces cerevisiae (strain ATCC 204508 / S288c) (Baker's yeast), this protein is SWIRM domain-containing protein FUN19 (FUN19).